Consider the following 335-residue polypeptide: Phosphate acyltransferase (335 aa).

It belongs to the PlsX family. In terms of assembly, homodimer. Probably interacts with PlsY.

It is found in the cytoplasm. It carries out the reaction a fatty acyl-[ACP] + phosphate = an acyl phosphate + holo-[ACP]. It functions in the pathway lipid metabolism; phospholipid metabolism. Functionally, catalyzes the reversible formation of acyl-phosphate (acyl-PO(4)) from acyl-[acyl-carrier-protein] (acyl-ACP). This enzyme utilizes acyl-ACP as fatty acyl donor, but not acyl-CoA. This is Phosphate acyltransferase from Streptococcus uberis (strain ATCC BAA-854 / 0140J).